Consider the following 310-residue polypeptide: HPr kinase/phosphorylase (310 aa).

Catalysis depends on residues His-138 and Lys-159. 153-160 lines the ATP pocket; it reads GASGIGKS. Ser-160 contacts Mg(2+). Asp-177 (proton acceptor; for phosphorylation activity. Proton donor; for dephosphorylation activity) is an active-site residue. Residues 201 to 210 are important for the catalytic mechanism of both phosphorylation and dephosphorylation; sequence IEIRGVGIID. Glu-202 contacts Mg(2+). Arg-243 is a catalytic residue. Positions 264–269 are important for the catalytic mechanism of dephosphorylation; the sequence is PVKTGR.

Belongs to the HPrK/P family. As to quaternary structure, homohexamer. Mg(2+) is required as a cofactor.

It catalyses the reaction [HPr protein]-L-serine + ATP = [HPr protein]-O-phospho-L-serine + ADP + H(+). The enzyme catalyses [HPr protein]-O-phospho-L-serine + phosphate + H(+) = [HPr protein]-L-serine + diphosphate. Functionally, catalyzes the ATP- as well as the pyrophosphate-dependent phosphorylation of a specific serine residue in HPr, a phosphocarrier protein of the phosphoenolpyruvate-dependent sugar phosphotransferase system (PTS). HprK/P also catalyzes the pyrophosphate-producing, inorganic phosphate-dependent dephosphorylation (phosphorolysis) of seryl-phosphorylated HPr (P-Ser-HPr). The two antagonistic activities of HprK/P are regulated by several intracellular metabolites, which change their concentration in response to the absence or presence of rapidly metabolisable carbon sources (glucose, fructose, etc.) in the growth medium. Therefore, by controlling the phosphorylation state of HPr, HPrK/P is a sensor enzyme that plays a major role in the regulation of carbon metabolism and sugar transport: it mediates carbon catabolite repression (CCR), and regulates PTS-catalyzed carbohydrate uptake and inducer exclusion. This chain is HPr kinase/phosphorylase, found in Lactococcus lactis subsp. cremoris (strain MG1363).